We begin with the raw amino-acid sequence, 785 residues long: Probably inactive leucine-rich repeat receptor-like protein kinase At5g58150 (785 aa).

The first 21 residues, 1 to 21 (MRLSLWGSLLFFSFFVKHLTS), serve as a signal peptide directing secretion. Topologically, residues 22–436 (LDPNTDAYHL…KVNKKNTGLK (415 aa)) are extracellular. LRR repeat units lie at residues 64–88 (SENVLHISASGLDLSGSIPDNTIGK), 89–112 (MSKLQTLDLSGNKITSLPSDLWSL), 114–136 (LLESLNLSSNRISEPLPSNIGNF), 138–160 (SLHTLDLSFNSISGKIPAAISNL), 161–184 (VNLTTLKLHNNDFQFGVPPELVHC), 186–208 (SLLSIDLSSNRLNESLPVGFGSA), 210–232 (PLLKSLNLSRNLFQGSLIGVLHE), 236–258 (TVDLSENRFDGHILQLIPGHKHN), 259–283 (WSSLIHLDLSDNSFVGHIFNGLSSA), 284–306 (HKLGHLNLACNRFRAQEFPEIGK), 307–330 (LSALHYLNLSRTNLTNIIPREISR), 331–355 (LSHLKVLDLSSNNLTGHVPMLSVKN), 357–377 (EVLDLSLNKLDGDIPRPLLEK), and 379–405 (AMMQRFNFSFNNLTFCNPNFSQETIQR). Asparagine 119 is a glycosylation site (N-linked (GlcNAc...) asparagine). N-linked (GlcNAc...) asparagine glycans are attached at residues asparagine 162, asparagine 198, asparagine 216, and asparagine 258. Asparagine 314, asparagine 319, and asparagine 343 each carry an N-linked (GlcNAc...) asparagine glycan. N-linked (GlcNAc...) asparagine glycans are attached at residues asparagine 385, asparagine 390, and asparagine 397. Residues 437-457 (IGLGLAISMAFLLIGLLLILV) form a helical membrane-spanning segment. Residues 458–785 (ALRVRRKSRT…GLLKDISPNY (328 aa)) lie on the Cytoplasmic side of the membrane. A phosphothreonine mark is found at threonine 510 and threonine 518. The 265-residue stretch at 521 to 785 (FDRGTMLWEG…GLLKDISPNY (265 aa)) folds into the Protein kinase domain. Residues 527–535 (LWEGKSGPT) and lysine 549 contribute to the ATP site. Residues tyrosine 594 and tyrosine 683 each carry the phosphotyrosine modification.

It belongs to the protein kinase superfamily. Ser/Thr protein kinase family.

It localises to the cell membrane. This is Probably inactive leucine-rich repeat receptor-like protein kinase At5g58150 from Arabidopsis thaliana (Mouse-ear cress).